A 288-amino-acid chain; its full sequence is 33 kDa chaperonin (288 aa).

Intrachain disulfides connect Cys236-Cys238 and Cys269-Cys272.

It belongs to the HSP33 family. In terms of processing, under oxidizing conditions two disulfide bonds are formed involving the reactive cysteines. Under reducing conditions zinc is bound to the reactive cysteines and the protein is inactive.

The protein localises to the cytoplasm. Its function is as follows. Redox regulated molecular chaperone. Protects both thermally unfolding and oxidatively damaged proteins from irreversible aggregation. Plays an important role in the bacterial defense system toward oxidative stress. This Lactococcus lactis subsp. cremoris (strain MG1363) protein is 33 kDa chaperonin.